The sequence spans 844 residues: Elongation factor 2 (844 aa).

The tr-type G domain maps to 17–255 (TNVRNMSVIA…LWGDNYFNPK (239 aa)). 26–33 (AHVDHGKS) contacts GTP. Phosphothreonine is present on residues T57 and T59. Residues 160 to 163 (NKVD) and 215 to 217 (SGL) contribute to the GTP site. H700 bears the Diphthamide mark.

Belongs to the TRAFAC class translation factor GTPase superfamily. Classic translation factor GTPase family. EF-G/EF-2 subfamily.

It is found in the cytoplasm. The enzyme catalyses GTP + H2O = GDP + phosphate + H(+). Catalyzes the GTP-dependent ribosomal translocation step during translation elongation. During this step, the ribosome changes from the pre-translocational (PRE) to the post-translocational (POST) state as the newly formed A-site-bound peptidyl-tRNA and P-site-bound deacylated tRNA move to the P and E sites, respectively. Catalyzes the coordinated movement of the two tRNA molecules, the mRNA and conformational changes in the ribosome. This is Elongation factor 2 (cot-3) from Neurospora crassa (strain ATCC 24698 / 74-OR23-1A / CBS 708.71 / DSM 1257 / FGSC 987).